Here is a 577-residue protein sequence, read N- to C-terminus: Thrombomodulin (577 aa).

An N-terminal signal peptide occupies residues Met-1 to Gly-16. The Extracellular portion of the chain corresponds to Leu-17 to Ser-517. The region spanning Val-31–Phe-167 is the C-type lectin domain. An N-linked (GlcNAc...) asparagine glycan is attached at Asn-113. A disulfide bridge links Cys-135 with Cys-156. 2 EGF-like domains span residues Gly-240–Ala-280 and Val-283–Glu-323. An N-linked (GlcNAc...) asparagine glycan is attached at Asn-243. 18 disulfide bridges follow: Cys-244–Cys-255, Cys-251–Cys-264, Cys-266–Cys-279, Cys-287–Cys-295, Cys-291–Cys-307, Cys-309–Cys-322, Cys-328–Cys-339, Cys-335–Cys-348, Cys-350–Cys-361, Cys-368–Cys-377, Cys-373–Cys-387, Cys-389–Cys-403, Cys-407–Cys-416, Cys-412–Cys-424, Cys-426–Cys-438, Cys-444–Cys-454, Cys-449–Cys-463, and Cys-465–Cys-479. The N-linked (GlcNAc...) asparagine glycan is linked to Asn-256. The EGF-like 3; calcium-binding domain occupies Asp-324–Val-362. 2 EGF-like domains span residues Leu-364–Glu-404 and Cys-403–Thr-439. N-linked (GlcNAc...) asparagine glycosylation occurs at Asn-408. Positions Asp-440–Asp-480 constitute an EGF-like 6; calcium-binding domain. The tract at residues Ser-476–Arg-513 is disordered. A compositionally biased stretch (basic and acidic residues) spans Lys-477–Glu-492. Residue Ser-494 is glycosylated (O-linked (Xyl...) (chondroitin sulfate) serine). Residues Pro-498 to Ala-512 show a composition bias toward pro residues. A helical transmembrane segment spans residues Gly-518–Leu-541. Residues Arg-542 to Phe-577 lie on the Cytoplasmic side of the membrane.

In terms of assembly, interacts with ITGAL, ITGAM and ITGB2. Interacts with thrombin/F2; this interaction switches the specificity of thrombin from a procoagulant to an anticoagulant and antifibrinolytic protease. Interacts with ANGP1 and ANGP2; these interactions significantly inhibit the generation of activated PC and TAFIa/CPB2 by the thrombin/thrombomodulin complex. Interacts with PF4; this interaction enhances generation of activated protein C. Interacts with HMGB1; this interaction inhibits HMGB1 inflammatory activity. Endothelial cells are unique in synthesizing thrombomodulin.

It is found in the membrane. Functionally, endothelial cell receptor that plays a critical role in regulating several physiological processes including hemostasis, coagulation, fibrinolysis, inflammation, and angiogenesis. Acts as a cofactor for thrombin activation of protein C/PROC on the surface of vascular endothelial cells leading to initiation of the activated protein C anticoagulant pathway. Also accelerates the activation of the plasma carboxypeptidase B2/CPB2, which catalyzes removal of C-terminal basic amino acids from its substrates including kinins or anaphylatoxins leading to fibrinolysis inhibition. Plays critical protective roles in changing the cleavage specificity of protease-activated receptor 1/PAR1, inhibiting endothelial cell permeability and inflammation. Suppresses inflammation distinctly from its anticoagulant cofactor activity by sequestering HMGB1 thereby preventing it from engaging cellular receptors such as RAGE and contributing to the inflammatory response. The polypeptide is Thrombomodulin (Thbd) (Mus musculus (Mouse)).